The sequence spans 290 residues: 4-hydroxy-tetrahydrodipicolinate synthase (290 aa).

Thr-44 is a pyruvate binding site. The active-site Proton donor/acceptor is Tyr-132. Lys-160 serves as the catalytic Schiff-base intermediate with substrate. Ile-202 provides a ligand contact to pyruvate.

This sequence belongs to the DapA family. Homotetramer; dimer of dimers.

Its subcellular location is the cytoplasm. It carries out the reaction L-aspartate 4-semialdehyde + pyruvate = (2S,4S)-4-hydroxy-2,3,4,5-tetrahydrodipicolinate + H2O + H(+). Its pathway is amino-acid biosynthesis; L-lysine biosynthesis via DAP pathway; (S)-tetrahydrodipicolinate from L-aspartate: step 3/4. Catalyzes the condensation of (S)-aspartate-beta-semialdehyde [(S)-ASA] and pyruvate to 4-hydroxy-tetrahydrodipicolinate (HTPA). The polypeptide is 4-hydroxy-tetrahydrodipicolinate synthase (Geobacter metallireducens (strain ATCC 53774 / DSM 7210 / GS-15)).